The sequence spans 477 residues: Trigger factor (477 aa).

Residues 174 to 261 (GDIAVVSFKG…LKDLKEKELP (88 aa)) enclose the PPIase FKBP-type domain. The disordered stretch occupies residues 435 to 477 (VNEKTTKTSKATKTSKTTKATKTATKTTKTTKTTKTQNKKEKK). Residues 442-470 (TSKATKTSKTTKATKTATKTTKTTKTTKT) show a composition bias toward low complexity.

This sequence belongs to the FKBP-type PPIase family. Tig subfamily.

The protein localises to the cytoplasm. The enzyme catalyses [protein]-peptidylproline (omega=180) = [protein]-peptidylproline (omega=0). Involved in protein export. Acts as a chaperone by maintaining the newly synthesized protein in an open conformation. Functions as a peptidyl-prolyl cis-trans isomerase. This is Trigger factor from Prochlorococcus marinus (strain MIT 9301).